The chain runs to 840 residues: Axin-2 (840 aa).

The interval 1 to 75 is disordered; the sequence is MSSAVLVTLL…EGRASPDSPL (75 aa). The short motif at 21–30 is the Tankyrase-binding motif element; sequence APRPPVPGEE. Positions 42–55 are enriched in polar residues; that stretch reads KVQSTKPMPVSSNA. Residues 56 to 69 show a composition bias toward basic and acidic residues; it reads RRNEDGLGEPEGRA. The RGS domain maps to 81–200; it reads SLHSLLGDQD…LTSDIYLEYV (120 aa). Disordered stretches follow at residues 300 to 363, 398 to 435, 447 to 485, 572 to 614, and 715 to 745; these read SELS…KEMT, IREDEEKEGSEQALSSRDGAPVQHPLALLPSGSYEEDP, LKTPGCQSPGVGRYSPRSRSPDHHHQHHHHQQCHTLLPT, RGGT…GDRS, and ASQQRDRNHSAAGQAGASPFANPSLAPEDHK. Positions 303-318 are enriched in low complexity; the sequence is SSDALTDDSMSMTDSS. An interaction with GSK3B region spans residues 327–413; it reads MGSKKQLQRE…KEGSEQALSS (87 aa). Positions 413-478 are interaction with beta-catenin; that stretch reads SRDGAPVQHP…HHHQHHHHQQ (66 aa). Residues 468-478 show a composition bias toward basic residues; sequence DHHHQHHHHQQ. A DIX domain is found at 758-840; the sequence is ASELVVTYFF…RILGKVERID (83 aa).

As to quaternary structure, interacts with glycogen synthase kinase-3 beta (GSK3B) and beta-catenin. The interaction between axin and beta-catenin occurs via the armadillo repeats contained in beta-catenin. Interacts with SMAD7 and RNF111. Interacts with ANKRD6. Interacts with SIAH1. Interacts with SIAH2. Post-translationally, ADP-ribosylated by tankyrase TNKS and TNKS2. Poly-ADP-ribosylated protein is recognized by RNF146, followed by ubiquitination and subsequent activation of the Wnt signaling pathway. In terms of processing, ubiquitinated by RNF146 when poly-ADP-ribosylated, leading to its degradation and subsequent activation of the Wnt signaling pathway. Deubiquitinated by USP34, deubiquitinated downstream of beta-catenin stabilization step: deubiquitination is important Wnt signaling to positively regulate beta-catenin (CTNBB1)-mediated transcription. Probably phosphorylated by GSK3B and dephosphorylated by PP2A. As to expression, expressed in Tcf7-positive innate-like T-cells (at protein level).

The protein resides in the cytoplasm. Inhibitor of the Wnt signaling pathway. Down-regulates beta-catenin. Probably facilitate the phosphorylation of beta-catenin and APC by GSK3B. The protein is Axin-2 of Mus musculus (Mouse).